Consider the following 578-residue polypeptide: Lipoprotein A (578 aa).

Positions 1 to 27 (MNKKYFKKYSWVLILSTSILAPMTLAS) are cleaved as a signal peptide. Residue C28 is the site of N-palmitoyl cysteine attachment. The S-diacylglycerol cysteine moiety is linked to residue C28. Disordered stretches follow at residues 35-135 (KEDK…NTSA) and 172-203 (AKDD…EVKD). Polar residues predominate over residues 41 to 50 (NDSSNLSNKT). Basic and acidic residues predominate over residues 51-74 (NKSDPNDHLKDKDKNVSQDNKDST). The segment covering 75–96 (NKAVSNENSQTQSQKTNESSQN) has biased composition (polar residues). Residues 108–119 (ITNQNSSSNTKS) show a composition bias toward low complexity. Over residues 172–181 (AKDDSKEKSK) the composition is skewed to basic and acidic residues.

Belongs to the M.pulmonis LipAB lipoprotein family.

It is found in the cell membrane. This is Lipoprotein A (lipA) from Mycoplasmopsis pulmonis (strain UAB CTIP) (Mycoplasma pulmonis).